A 256-amino-acid chain; its full sequence is Small ribosomal subunit protein eS1 (256 aa).

An N-acetylalanine; partial modification is found at A2.

This sequence belongs to the eukaryotic ribosomal protein eS1 family. Component of the small ribosomal subunit. Mature ribosomes consist of a small (40S) and a large (60S) subunit. The 40S subunit contains about 33 different proteins and 1 molecule of RNA (18S). The 60S subunit contains about 49 different proteins and 3 molecules of RNA (25S, 5.8S and 5S).

It localises to the cytoplasm. The polypeptide is Small ribosomal subunit protein eS1 (Candida albicans (strain SC5314 / ATCC MYA-2876) (Yeast)).